The sequence spans 622 residues: Chaperone protein HscA homolog (622 aa).

This sequence belongs to the heat shock protein 70 family.

Chaperone involved in the maturation of iron-sulfur cluster-containing proteins. Has a low intrinsic ATPase activity which is markedly stimulated by HscB. This Burkholderia ambifaria (strain MC40-6) protein is Chaperone protein HscA homolog.